A 202-amino-acid chain; its full sequence is Glycoprotein U22 (202 aa).

A signal peptide spans Met-1–Ala-20. N-linked (GlcNAc...) asparagine; by host glycosylation is found at Asn-54, Asn-107, Asn-112, and Asn-125. The helical transmembrane segment at Phe-172–Phe-192 threads the bilayer.

It is found in the membrane. The protein is Glycoprotein U22 (U22) of Homo sapiens (Human).